The following is a 1211-amino-acid chain: DNA-directed RNA polymerase subunit beta' (1211 aa).

Cysteine 60, cysteine 62, cysteine 75, and cysteine 78 together coordinate Zn(2+). Residues aspartate 449, aspartate 451, and aspartate 453 each coordinate Mg(2+). The Zn(2+) site is built by cysteine 818, cysteine 892, cysteine 899, and cysteine 902.

The protein belongs to the RNA polymerase beta' chain family. As to quaternary structure, the RNAP catalytic core consists of 2 alpha, 1 beta, 1 beta' and 1 omega subunit. When a sigma factor is associated with the core the holoenzyme is formed, which can initiate transcription. Mg(2+) is required as a cofactor. Requires Zn(2+) as cofactor.

The enzyme catalyses RNA(n) + a ribonucleoside 5'-triphosphate = RNA(n+1) + diphosphate. In terms of biological role, DNA-dependent RNA polymerase catalyzes the transcription of DNA into RNA using the four ribonucleoside triphosphates as substrates. This is DNA-directed RNA polymerase subunit beta' from Limosilactobacillus reuteri (strain DSM 20016) (Lactobacillus reuteri).